Here is a 1283-residue protein sequence, read N- to C-terminus: Bifunctional dioxygenase (DOX)-epoxy alcohol synthase (EAS) (1283 aa).

The interval 1-64 (MAEHKNGVAT…LPKEMGDGSY (64 aa)) is disordered. A fatty acid alpha-dioxygenase region spans residues 130–476 (TNSFISQLWN…DGKFNDDELV (347 aa)). His227 contacts heme b. Residue Tyr405 is part of the active site. His408 serves as a coordination point for heme b. Residues 684–1108 (INIIGYNAAK…WDDGCGTDLF (425 aa)) form an epoxy alcohol synthase region. Cys1035 is a heme binding site.

It in the N-terminal section; belongs to the peroxidase family. In the C-terminal section; belongs to the cytochrome P450 family. As to quaternary structure, homotetramer. Heme b serves as cofactor. The cofactor is heme.

It catalyses the reaction (9Z,12Z)-octadecadienoate + O2 = (8E,10R,12Z)-10-hydroperoxyoctadeca-8,12-dienoate. It carries out the reaction (8E,10R,12Z)-10-hydroperoxyoctadeca-8,12-dienoate = (12S,13R)-epoxy-(10R)-hydroxy-(8E)-octadecenoate. The enzyme catalyses (9Z)-octadecenoate + O2 = (8R)-hydroperoxy-(9Z)-octadecenoate. In terms of biological role, bifunctional dioxygenase (DOX)-epoxy alcohol synthase (EAS) that converts linoleic acid (18:2n-6) sequentially to 10(R)-hydroperoxy-8(E),12(Z)-octadecadienoic acid (10R-HPODE) and 10R-HPODE further to 12(13)-epoxy-10-hydroxy-8(E)-octa-decenoic acid as the end product. Linoleic acid is oxidized mainly to the R stereoisomer of 10-HPODE. The dioxygenase domain is also able to oygenate position C-8 of linoleic acid to produce 8(R)-hydroperoxy-8(E),12(Z)-octadecadienoic acid (8R-HPODE). This is Bifunctional dioxygenase (DOX)-epoxy alcohol synthase (EAS) from Fusarium oxysporum (strain Fo5176) (Fusarium vascular wilt).